Reading from the N-terminus, the 124-residue chain is Fluoride-specific ion channel FluC (124 aa).

The next 4 helical transmembrane spans lie at Ile5 to Trp25, Thr38 to Leu58, Gly69 to Leu89, and Ala97 to Ala117. Na(+) is bound by residues Gly76 and Thr79.

This sequence belongs to the fluoride channel Fluc/FEX (TC 1.A.43) family.

The protein resides in the cell inner membrane. It carries out the reaction fluoride(in) = fluoride(out). With respect to regulation, na(+) is not transported, but it plays an essential structural role and its presence is essential for fluoride channel function. Fluoride-specific ion channel. Important for reducing fluoride concentration in the cell, thus reducing its toxicity. In Pseudomonas fluorescens (strain SBW25), this protein is Fluoride-specific ion channel FluC.